The primary structure comprises 258 residues: Large ribosomal subunit protein bL28m (258 aa).

Residues 1 to 21 constitute a mitochondrion transit peptide; it reads MQKIFRPFQLTRGFTSSVKNF.

It belongs to the bacterial ribosomal protein bL28 family. As to quaternary structure, component of the mitochondrial large ribosomal subunit (mt-LSU). Mature yeast 74S mitochondrial ribosomes consist of a small (37S) and a large (54S) subunit. The 37S small subunit contains a 15S ribosomal RNA (15S mt-rRNA) and 34 different proteins. The 54S large subunit contains a 21S rRNA (21S mt-rRNA) and 46 different proteins.

It is found in the mitochondrion. Component of the mitochondrial ribosome (mitoribosome), a dedicated translation machinery responsible for the synthesis of mitochondrial genome-encoded proteins, including at least some of the essential transmembrane subunits of the mitochondrial respiratory chain. The mitoribosomes are attached to the mitochondrial inner membrane and translation products are cotranslationally integrated into the membrane. This chain is Large ribosomal subunit protein bL28m (MRPL24), found in Saccharomyces cerevisiae (strain ATCC 204508 / S288c) (Baker's yeast).